Reading from the N-terminus, the 289-residue chain is BTB/POZ domain-containing protein KCTD7 (289 aa).

The segment covering 1 to 10 has biased composition (polar residues); sequence MVVVTGQSKG. The disordered stretch occupies residues 1–35; sequence MVVVTGQSKGSGDPDEAMSSSDAEDDFQEPATPTA. Residues 51–149 form the BTB domain; that stretch reads EVVPLNVGGM…HLEDVQPLKG (99 aa).

The protein localises to the cell membrane. It localises to the cytoplasm. Its subcellular location is the cytosol. Its function is as follows. May be involved in the control of excitability of cortical neurons. This is BTB/POZ domain-containing protein KCTD7 (KCTD7) from Gallus gallus (Chicken).